A 106-amino-acid chain; its full sequence is Small ribosomal subunit protein uS10 (106 aa).

The protein belongs to the universal ribosomal protein uS10 family. Part of the 30S ribosomal subunit.

In terms of biological role, involved in the binding of tRNA to the ribosomes. In Pyrobaculum calidifontis (strain DSM 21063 / JCM 11548 / VA1), this protein is Small ribosomal subunit protein uS10.